The sequence spans 184 residues: Bcl-2-modifying factor (184 aa).

The interaction with DLC2 stretch occupies residues 67–75 (DKATQTLSP). Positions 133 to 147 (IARKLQCIADQFHRL) match the BH3 motif.

Belongs to the Bcl-2 family. As to quaternary structure, interacts with MCL1, BCL2, BCL2L1/BCL-Xl, BCL2A1 and BCL2L2/BCL-w. Interacts with the myosin V actin motor complex through its binding to DLC2. In terms of tissue distribution, isoform 1 is mainly expressed in B-lymphoid cells. Isoform 2 and isoform 3 are mainly expressed in B-CLL and normal B-cells.

Functionally, may play a role in apoptosis. Isoform 1 seems to be the main initiator. The chain is Bcl-2-modifying factor (BMF) from Homo sapiens (Human).